Here is a 353-residue protein sequence, read N- to C-terminus: Quinolinate synthase (353 aa).

Positions 47 and 68 each coordinate iminosuccinate. Position 113 (Cys113) interacts with [4Fe-4S] cluster. Residues 139–141 and Ser156 each bind iminosuccinate; that span reads YAN. A [4Fe-4S] cluster-binding site is contributed by Cys200. Residues 226 to 228 and Thr243 contribute to the iminosuccinate site; that span reads HPE. Cys297 lines the [4Fe-4S] cluster pocket.

Belongs to the quinolinate synthase family. Type 1 subfamily. [4Fe-4S] cluster is required as a cofactor.

Its subcellular location is the cytoplasm. The enzyme catalyses iminosuccinate + dihydroxyacetone phosphate = quinolinate + phosphate + 2 H2O + H(+). It participates in cofactor biosynthesis; NAD(+) biosynthesis; quinolinate from iminoaspartate: step 1/1. Functionally, catalyzes the condensation of iminoaspartate with dihydroxyacetone phosphate to form quinolinate. This chain is Quinolinate synthase, found in Yersinia pseudotuberculosis serotype O:3 (strain YPIII).